Reading from the N-terminus, the 418-residue chain is Glutamyl-tRNA reductase (418 aa).

Substrate is bound by residues 49 to 52, Ser109, 114 to 116, and Gln120; these read TCNR and EPQ. The active-site Nucleophile is the Cys50. 189–194 is a binding site for NADP(+); it reads GAGETI.

Belongs to the glutamyl-tRNA reductase family. In terms of assembly, homodimer.

It catalyses the reaction (S)-4-amino-5-oxopentanoate + tRNA(Glu) + NADP(+) = L-glutamyl-tRNA(Glu) + NADPH + H(+). Its pathway is porphyrin-containing compound metabolism; protoporphyrin-IX biosynthesis; 5-aminolevulinate from L-glutamyl-tRNA(Glu): step 1/2. Functionally, catalyzes the NADPH-dependent reduction of glutamyl-tRNA(Glu) to glutamate 1-semialdehyde (GSA). The sequence is that of Glutamyl-tRNA reductase from Escherichia coli O9:H4 (strain HS).